A 625-amino-acid chain; its full sequence is tRNA uridine 5-carboxymethylaminomethyl modification enzyme MnmG (625 aa).

Residues 13 to 18 (GGGHAG), valine 125, and serine 182 each bind FAD. 276–290 (GPRYCPSIEDKITRF) is a binding site for NAD(+). Glutamine 373 serves as a coordination point for FAD.

It belongs to the MnmG family. In terms of assembly, homodimer. Heterotetramer of two MnmE and two MnmG subunits. FAD serves as cofactor.

It localises to the cytoplasm. NAD-binding protein involved in the addition of a carboxymethylaminomethyl (cmnm) group at the wobble position (U34) of certain tRNAs, forming tRNA-cmnm(5)s(2)U34. In Lactococcus lactis subsp. lactis (strain IL1403) (Streptococcus lactis), this protein is tRNA uridine 5-carboxymethylaminomethyl modification enzyme MnmG.